We begin with the raw amino-acid sequence, 323 residues long: Thiamine-monophosphate kinase (323 aa).

Aspartate 30, serine 45, threonine 46, and aspartate 47 together coordinate Mg(2+). Histidine 54 is a substrate binding site. Residues aspartate 75 and aspartate 122 each contribute to the Mg(2+) site. ATP-binding positions include glycine 121–aspartate 122 and arginine 146. Aspartate 212 is a binding site for Mg(2+). Serine 214 is a binding site for ATP. Aspartate 215 serves as a coordination point for Mg(2+). Positions 263 and 319 each coordinate substrate.

The protein belongs to the thiamine-monophosphate kinase family.

It catalyses the reaction thiamine phosphate + ATP = thiamine diphosphate + ADP. It participates in cofactor biosynthesis; thiamine diphosphate biosynthesis; thiamine diphosphate from thiamine phosphate: step 1/1. Catalyzes the ATP-dependent phosphorylation of thiamine-monophosphate (TMP) to form thiamine-pyrophosphate (TPP), the active form of vitamin B1. This chain is Thiamine-monophosphate kinase, found in Buchnera aphidicola subsp. Acyrthosiphon pisum (strain APS) (Acyrthosiphon pisum symbiotic bacterium).